Here is a 451-residue protein sequence, read N- to C-terminus: Interferon-related developmental regulator 1 (451 aa).

A compositionally biased stretch (basic residues) spans 1–10 (MPKNKKRNTP). The segment at 1-69 (MPKNKKRNTP…PSSFAEDGPE (69 aa)) is disordered. The segment covering 23–33 (AAAATAATAGG) has biased composition (low complexity). Positions 49–61 (ETMSHCSGYSDPS) are enriched in polar residues.

The protein belongs to the IFRD family. As to quaternary structure, interacts with PSIP1/LEDGF. Expressed in a variety of tissues.

Its function is as follows. Could play a role in regulating gene activity in the proliferative and/or differentiative pathways induced by NGF. May be an autocrine factor that attenuates or amplifies the initial ligand-induced signal. This Homo sapiens (Human) protein is Interferon-related developmental regulator 1 (IFRD1).